The chain runs to 645 residues: 1-deoxy-D-xylulose-5-phosphate synthase (645 aa).

Thiamine diphosphate is bound by residues His-79 and Ala-120–Ser-122. Asp-155 lines the Mg(2+) pocket. Thiamine diphosphate-binding positions include Gly-156–Ala-157, Asn-184, Tyr-293, and Glu-375. A Mg(2+)-binding site is contributed by Asn-184.

Belongs to the transketolase family. DXPS subfamily. As to quaternary structure, homodimer. Mg(2+) is required as a cofactor. Requires thiamine diphosphate as cofactor.

The enzyme catalyses D-glyceraldehyde 3-phosphate + pyruvate + H(+) = 1-deoxy-D-xylulose 5-phosphate + CO2. It functions in the pathway metabolic intermediate biosynthesis; 1-deoxy-D-xylulose 5-phosphate biosynthesis; 1-deoxy-D-xylulose 5-phosphate from D-glyceraldehyde 3-phosphate and pyruvate: step 1/1. Catalyzes the acyloin condensation reaction between C atoms 2 and 3 of pyruvate and glyceraldehyde 3-phosphate to yield 1-deoxy-D-xylulose-5-phosphate (DXP). This chain is 1-deoxy-D-xylulose-5-phosphate synthase, found in Ruegeria sp. (strain TM1040) (Silicibacter sp.).